Reading from the N-terminus, the 65-residue chain is Large ribosomal subunit protein bL35 (65 aa).

Belongs to the bacterial ribosomal protein bL35 family.

The chain is Large ribosomal subunit protein bL35 from Phytoplasma australiense.